The chain runs to 335 residues: N-acetyl-gamma-glutamyl-phosphate reductase (335 aa).

The active site involves cysteine 156.

Belongs to the NAGSA dehydrogenase family. Type 1 subfamily.

It is found in the cytoplasm. It catalyses the reaction N-acetyl-L-glutamate 5-semialdehyde + phosphate + NADP(+) = N-acetyl-L-glutamyl 5-phosphate + NADPH + H(+). The protein operates within amino-acid biosynthesis; L-arginine biosynthesis; N(2)-acetyl-L-ornithine from L-glutamate: step 3/4. Catalyzes the NADPH-dependent reduction of N-acetyl-5-glutamyl phosphate to yield N-acetyl-L-glutamate 5-semialdehyde. The sequence is that of N-acetyl-gamma-glutamyl-phosphate reductase from Aeromonas hydrophila subsp. hydrophila (strain ATCC 7966 / DSM 30187 / BCRC 13018 / CCUG 14551 / JCM 1027 / KCTC 2358 / NCIMB 9240 / NCTC 8049).